The sequence spans 465 residues: UDP-N-acetylmuramoylalanine--D-glutamate ligase (465 aa).

Residue 127–133 (GSNGKST) participates in ATP binding.

This sequence belongs to the MurCDEF family.

It localises to the cytoplasm. The catalysed reaction is UDP-N-acetyl-alpha-D-muramoyl-L-alanine + D-glutamate + ATP = UDP-N-acetyl-alpha-D-muramoyl-L-alanyl-D-glutamate + ADP + phosphate + H(+). Its pathway is cell wall biogenesis; peptidoglycan biosynthesis. Cell wall formation. Catalyzes the addition of glutamate to the nucleotide precursor UDP-N-acetylmuramoyl-L-alanine (UMA). The sequence is that of UDP-N-acetylmuramoylalanine--D-glutamate ligase from Cereibacter sphaeroides (strain ATCC 17029 / ATH 2.4.9) (Rhodobacter sphaeroides).